The following is a 144-amino-acid chain: Large ribosomal subunit protein uL16 (144 aa).

Positions 1–16 (MLIPKRVKYRKQHRPR) are enriched in basic residues. Residues 1 to 25 (MLIPKRVKYRKQHRPRGNGGVSKGG) form a disordered region.

This sequence belongs to the universal ribosomal protein uL16 family. As to quaternary structure, part of the 50S ribosomal subunit.

Binds 23S rRNA and is also seen to make contacts with the A and possibly P site tRNAs. This is Large ribosomal subunit protein uL16 from Desulforamulus reducens (strain ATCC BAA-1160 / DSM 100696 / MI-1) (Desulfotomaculum reducens).